Consider the following 406-residue polypeptide: Phosphopentomutase (406 aa).

Mn(2+)-binding residues include Asp10, Asp305, His310, Asp346, His347, and His358.

This sequence belongs to the phosphopentomutase family. Requires Mn(2+) as cofactor.

It is found in the cytoplasm. The catalysed reaction is 2-deoxy-alpha-D-ribose 1-phosphate = 2-deoxy-D-ribose 5-phosphate. It carries out the reaction alpha-D-ribose 1-phosphate = D-ribose 5-phosphate. It participates in carbohydrate degradation; 2-deoxy-D-ribose 1-phosphate degradation; D-glyceraldehyde 3-phosphate and acetaldehyde from 2-deoxy-alpha-D-ribose 1-phosphate: step 1/2. Isomerase that catalyzes the conversion of deoxy-ribose 1-phosphate (dRib-1-P) and ribose 1-phosphate (Rib-1-P) to deoxy-ribose 5-phosphate (dRib-5-P) and ribose 5-phosphate (Rib-5-P), respectively. In Sinorhizobium fredii (strain NBRC 101917 / NGR234), this protein is Phosphopentomutase.